The primary structure comprises 305 residues: Ribonuclease BN (305 aa).

The Zn(2+) site is built by His-64, His-66, Asp-68, His-69, His-141, Asp-212, and His-270. The active-site Proton acceptor is the Asp-68.

It belongs to the RNase Z family. RNase BN subfamily. Homodimer. The cofactor is Zn(2+).

In terms of biological role, zinc phosphodiesterase, which has both exoribonuclease and endoribonuclease activities. In Escherichia coli O157:H7, this protein is Ribonuclease BN.